The sequence spans 384 residues: Dual-specificity RNA methyltransferase RlmN (384 aa).

Glutamate 93 serves as the catalytic Proton acceptor. The 241-residue stretch at 99 to 339 folds into the Radical SAM core domain; it reads EETRGTLCVS…TTIRKTRGDD (241 aa). A disulfide bridge connects residues cysteine 106 and cysteine 344. Positions 113, 117, and 120 each coordinate [4Fe-4S] cluster. Residues 170-171, serine 202, 224-226, and asparagine 301 contribute to the S-adenosyl-L-methionine site; these read GE and SLH. Residue cysteine 344 is the S-methylcysteine intermediate of the active site.

This sequence belongs to the radical SAM superfamily. RlmN family. [4Fe-4S] cluster is required as a cofactor.

Its subcellular location is the cytoplasm. It catalyses the reaction adenosine(2503) in 23S rRNA + 2 reduced [2Fe-2S]-[ferredoxin] + 2 S-adenosyl-L-methionine = 2-methyladenosine(2503) in 23S rRNA + 5'-deoxyadenosine + L-methionine + 2 oxidized [2Fe-2S]-[ferredoxin] + S-adenosyl-L-homocysteine. The catalysed reaction is adenosine(37) in tRNA + 2 reduced [2Fe-2S]-[ferredoxin] + 2 S-adenosyl-L-methionine = 2-methyladenosine(37) in tRNA + 5'-deoxyadenosine + L-methionine + 2 oxidized [2Fe-2S]-[ferredoxin] + S-adenosyl-L-homocysteine. Its function is as follows. Specifically methylates position 2 of adenine 2503 in 23S rRNA and position 2 of adenine 37 in tRNAs. m2A2503 modification seems to play a crucial role in the proofreading step occurring at the peptidyl transferase center and thus would serve to optimize ribosomal fidelity. In Cupriavidus pinatubonensis (strain JMP 134 / LMG 1197) (Cupriavidus necator (strain JMP 134)), this protein is Dual-specificity RNA methyltransferase RlmN.